Consider the following 347-residue polypeptide: DnaJ protein ERDJ3B (347 aa).

A signal peptide spans 1-23 (MAAPRWIGPLLLLLLHFVAAVAG). Residues 25–90 (SYYDVLQVPK…EKRKIYDRYG (66 aa)) form the J domain.

Interacts with BIP1.

Its subcellular location is the endoplasmic reticulum. Its function is as follows. May play a role in protein folding in the endoplasmic reticulum. This is DnaJ protein ERDJ3B from Oryza sativa subsp. japonica (Rice).